The sequence spans 263 residues: Small ribosomal subunit protein eS4 (263 aa).

One can recognise an S4 RNA-binding domain in the interval 42-104 (LPLVIFLRNR…TNELFRLIYD (63 aa)).

Belongs to the eukaryotic ribosomal protein eS4 family.

This is Small ribosomal subunit protein eS4 (RpS4) from Spodoptera frugiperda (Fall armyworm).